The following is a 226-amino-acid chain: Thiopurine S-methyltransferase (226 aa).

4 residues coordinate S-adenosyl-L-methionine: Trp-10, Leu-47, Glu-68, and Arg-130.

It belongs to the class I-like SAM-binding methyltransferase superfamily. TPMT family.

The protein localises to the cytoplasm. The enzyme catalyses S-adenosyl-L-methionine + a thiopurine = S-adenosyl-L-homocysteine + a thiopurine S-methylether.. The sequence is that of Thiopurine S-methyltransferase from Shewanella sediminis (strain HAW-EB3).